A 288-amino-acid polypeptide reads, in one-letter code: Polyketide biosynthesis malonyl CoA-acyl carrier protein transacylase PksC (288 aa).

Residues Ser87 and His193 contribute to the active site.

Belongs to the FabD family.

Its subcellular location is the cytoplasm. It catalyses the reaction holo-[ACP] + malonyl-CoA = malonyl-[ACP] + CoA. It functions in the pathway antibiotic biosynthesis; bacillaene biosynthesis. Its function is as follows. Involved in some intermediate steps for the synthesis of the antibiotic polyketide bacillaene which is involved in secondary metabolism. It catalyzes the transfer of the malonyl-CoA group to the acyl-carrier-protein AcpK (Mal-AcpK). This is Polyketide biosynthesis malonyl CoA-acyl carrier protein transacylase PksC (pksC) from Bacillus subtilis (strain 168).